Reading from the N-terminus, the 236-residue chain is Flagellar L-ring protein (236 aa).

The N-terminal stretch at 1 to 16 is a signal peptide; it reads MRMQLTAVLAASLLAG. Residue Cys-17 is the site of N-palmitoyl cysteine attachment. Residue Cys-17 is the site of S-diacylglycerol cysteine attachment.

The protein belongs to the FlgH family. As to quaternary structure, the basal body constitutes a major portion of the flagellar organelle and consists of four rings (L,P,S, and M) mounted on a central rod.

It is found in the cell outer membrane. Its subcellular location is the bacterial flagellum basal body. In terms of biological role, assembles around the rod to form the L-ring and probably protects the motor/basal body from shearing forces during rotation. The chain is Flagellar L-ring protein from Sinorhizobium fredii (strain NBRC 101917 / NGR234).